Here is a 1303-residue protein sequence, read N- to C-terminus: MDEDEQNRYVAQLKDEFDSCDTTGTGYLDKEELTALCHKLSLDAHLPLLLDTLLGPQHYARVNFEEFKEGFVAVLSRSLDFSTSEEESSYLEPAVPEEVKPKYVKGTKRYGRRSRPDKTDLELTADSDSLPFGTDKVEANGVRRAKLRRSTSLESVESLKSDEDTGSNKESTHHYFVAQGQLKLWNQDGTGNCQRSSDNQQEVTDGQVRAVWEELGVGAAGSLNREELSLVCDHIGLKHLEAEELDALFRKLDKDQDGKVSLIEFQSGLFKPHDHASPLSTSTPARPKPLRTISKALEERVVRSTSPSLLSATVGQRLLTRLDDGSGCTSPEKVMALWTEEGIHNSRDILQTQTLDFSLEERLCLAELTLALDNELLVSGNGIHQAALVSYKNEINYLQVLADQACQERDKAKADLEQADRRNLQLVREVDDRHATMESLNESKIKDLEQEFRDKLTALRSESEYESEVLLEQVEKERERLRDELQLLRSQDISLQEDMCTTVNENRRLEEEVSALKEKLTEAESAISKLQNDLDRLLQDKYDGLDANGTGLLNQEEQFTEIFKEYEQQCRELQDRNDELCSELELLKSQGSGKRTRLSRSSLPANDWSNRRALTTESDSDDPEMKKGTSPQVRKKLQVTDKNVLGSLESLAPPVSIETELAMEKMKERYEQEVQDLKIQLETKVNFYERSMDLMRQNMEVERKDISQSFKMEISELEDLKARAEERAEQMRQTTERLEAELRGKTSGGAWGQEQERRIQRERAELEQNYAREISNLVLRLTSEKDQLEAELKLRMDREVLLVRAQLDEVTSENCALKDRLAVLQQDVKSLEEDVNNKRKKLEEMEKGYMKNREDEERLRKENSKCREEVLDLSARNLQLSSENAELSSRLCTDQRAVQTLTDRLAQVCQERDAAAVSSKQLQENLQQQENHGLRLQEQWRKEKELLERELQTAKEALQHLTVVESALTSQTLKNKSLEQDKESLLKETAENDQKLKKLQEALRNSETQIEQLNAQILTMWQEKDVHVQEAAAHIKMLQQSQDKVQELEERISQLRKEKEQVQHTHRLQEETAVSVLQNECKSLRVQNKELQNKVAQLQSRELELQRLTHECLTLRNKQAELETAKQEANQQAMRAESTRSMVQAQHTREIQELKEQMGSGTQEHASHLQTQLAEQQRRTQDFEDLLRSQAKQASVQMGLQQEQYEKLMASMQERMDEVEAKLKNTRVMLQEKVNQLKEQLAKNSKSDVLLKDLYVENSQLMKALQVTEQRQKSAEKKSFLLEEKVIALNKLLRKIAPASLTA.

2 consecutive EF-hand domains span residues 8-43 and 61-77; these read RYVA…LSLD and RVNF…VLSR. Positions 107–135 are disordered; sequence TKRYGRRSRPDKTDLELTADSDSLPFGTD. 2 consecutive EF-hand domains span residues 203–238 and 240–275; these read VTDG…IGLK and LEAE…PHDH. 5 residues coordinate Ca(2+): Asp-253, Asp-255, Asp-257, Lys-259, and Glu-264. The stretch at 464–590 forms a coiled coil; that stretch reads EYESEVLLEQ…CSELELLKSQ (127 aa). Residues 592–617 are compositionally biased toward polar residues; the sequence is SGKRTRLSRSSLPANDWSNRRALTTE. Residues 592–634 form a disordered region; it reads SGKRTRLSRSSLPANDWSNRRALTTESDSDDPEMKKGTSPQVR. 3 coiled-coil regions span residues 660–791, 821–876, and 919–1146; these read ELAM…LEAE, LAVL…LSAR, and SKQL…VQAQ. The interval 1156–1181 is disordered; that stretch reads EQMGSGTQEHASHLQTQLAEQQRRTQ. Positions 1159-1175 are enriched in polar residues; sequence GSGTQEHASHLQTQLAE. Positions 1202-1278 form a coiled coil; the sequence is QEQYEKLMAS…EQRQKSAEKK (77 aa).

The protein resides in the cytoplasm. It is found in the cytoskeleton. It localises to the microtubule organizing center. The protein localises to the centrosome. Functionally, required for the intracellular transport of organelles and vesicles, and is essential for the photoreceptor's outer segments formation, maintenance and function. This is Ninein-like protein (Ninl) from Danio rerio (Zebrafish).